Consider the following 187-residue polypeptide: Protein P18, mitochondrial (187 aa).

A mitochondrion-targeting transit peptide spans 1 to 17 (MRRLSSQLMCTAAAVRF). A disordered region spans residues 160–187 (NAAKAKADGKEHPSTLAQQQSLFDIKIQ).

The protein localises to the mitochondrion inner membrane. In terms of biological role, putative RNA-binding protein. This Leishmania tarentolae (Sauroleishmania tarentolae) protein is Protein P18, mitochondrial.